The chain runs to 274 residues: uncharacterized protein (274 aa).

Positions 235–274 are disordered; that stretch reads ETFDTQQDPKKTPETDKNAAYKGKEKKGKKEERGPRSIMK. The span at 241–274 shows a compositional bias: basic and acidic residues; the sequence is QDPKKTPETDKNAAYKGKEKKGKKEERGPRSIMK.

This is an uncharacterized protein from Treponema pallidum (strain Nichols).